Here is a 334-residue protein sequence, read N- to C-terminus: MATLKEKLIASVADDEAAVPNNKITVVGVGQVGMACAISILGKSLADELALVDVLEDKLKGEMMDLQHGSLFLQTPKIVADKDYSVTANSKIVVVTAGVRQQEGESRLNLVQRNVNVFKFIIPQIVKYSPDCTIIVVSNPVDILTYVTWKLSGLPKHRVIGSGCNLDSARFRYLMAEKLGIHPSSCHGWILGEHGDSSVAVWSGVNVAGVSLQELNPEMGTDNDSENWKEVHKMVVDSAYEVIKLKGYTNWAIGLSVADLIESMLKNLSRIHPVSTMVKGMYGIENEVFLSLPCILNARGLTSVINQKLKDDEVAQLRKSADTLWDIQKDLKDL.

An N-acetylalanine modification is found at A2. K7 bears the N6-acetyllysine mark. A phosphoserine mark is found at S11 and S44. Residues 30-58 and R100 each bind NAD(+); that span reads GQVG…LEDK. At K58 the chain carries N6-acetyllysine. A substrate-binding site is contributed by R107. The residue at position 119 (K119) is an N6-acetyllysine. NAD(+) is bound at residue N139. 2 residues coordinate substrate: N139 and R170. Catalysis depends on H194, which acts as the Proton acceptor. Y240 carries the phosphotyrosine modification. Substrate is bound at residue T249. K329 is modified (N6-acetyllysine).

Belongs to the LDH/MDH superfamily. LDH family. In terms of assembly, homotetramer. Interacts with PTEN upstream reading frame protein MP31; the interaction leads to inhibition of mitochondrial lactate dehydrogenase activity, preventing conversion of lactate to pyruvate in mitochondria.

The protein resides in the cytoplasm. It localises to the mitochondrion inner membrane. It catalyses the reaction (S)-lactate + NAD(+) = pyruvate + NADH + H(+). The protein operates within fermentation; pyruvate fermentation to lactate; (S)-lactate from pyruvate: step 1/1. In terms of biological role, interconverts simultaneously and stereospecifically pyruvate and lactate with concomitant interconversion of NADH and NAD(+). In Mus musculus (Mouse), this protein is L-lactate dehydrogenase B chain (Ldhb).